The following is a 279-amino-acid chain: Urease accessory protein UreD (279 aa).

This sequence belongs to the UreD family. As to quaternary structure, ureD, UreF and UreG form a complex that acts as a GTP-hydrolysis-dependent molecular chaperone, activating the urease apoprotein by helping to assemble the nickel containing metallocenter of UreC. The UreE protein probably delivers the nickel.

Its subcellular location is the cytoplasm. Its function is as follows. Required for maturation of urease via the functional incorporation of the urease nickel metallocenter. This chain is Urease accessory protein UreD, found in Streptococcus thermophilus (strain CNRZ 1066).